The chain runs to 1742 residues: Kinase non-catalytic C-lobe domain-containing protein 1 (1742 aa).

The 181-residue stretch at 37–217 folds into the KIND 1 domain; it reads VSLADILSLR…QELSENTWRG (181 aa). 2 disordered regions span residues 215–288 and 365–455; these read WRGR…EGLA and FKTQ…TEQS. Serine 267 is subject to Phosphoserine. The segment covering 403–412 has biased composition (polar residues); the sequence is LEASSPSQGS. Residues 426-445 are compositionally biased toward basic and acidic residues; the sequence is DSDHEGHIPRSEEKIPEESR. The region spanning 456 to 620 is the KIND 2 domain; sequence LSLKDLLSKL…RASTCKVHPE (165 aa). Disordered regions lie at residues 703 to 727, 744 to 876, 948 to 1006, and 1028 to 1076; these read DQLA…REGT, SNQL…KMTA, GPAS…LSDI, and VTRE…ASDF. Residues 711–727 are compositionally biased toward basic and acidic residues; sequence SNEKPKEGSGHLDREGT. Over residues 755–771 the composition is skewed to low complexity; it reads GATPDPDGDSGSPSSAT. Polar residues predominate over residues 782-791; the sequence is VTQQKGTSGT. Over residues 847 to 861 the composition is skewed to basic and acidic residues; it reads SDGHPEKPRPADRKL. The segment covering 949-965 has biased composition (low complexity); the sequence is PASPSESTSEEPGSQPE. At serine 951 the chain carries Phosphoserine. Residues 1043–1053 are compositionally biased toward polar residues; sequence GPSQDSTSHAS. Residues 1112–1177 adopt a coiled-coil conformation; it reads HTELEAQSPE…EMKSKVQFLS (66 aa). One can recognise an N-terminal Ras-GEF domain in the interval 1239–1367; sequence KARILQAGTP…ALLEVGTERR (129 aa). Residues 1461–1712 enclose the Ras-GEF domain; the sequence is STNQLFTQLT…SGADVSILAA (252 aa).

As to quaternary structure, interacts (via KIND2) with MAP2; the interaction enhances MAP2 phosphorylation and localizes KNDC1 to dendrites. As to expression, highly expressed in the brain and at low levels in the ovary. In the brain it is most prominently expressed in the cerebellum where it is restricted to the granular Purkinje cell layer.

The protein localises to the cell projection. It is found in the dendrite. It localises to the perikaryon. Its function is as follows. RAS-Guanine nucleotide exchange factor (GEF) that controls the negative regulation of neuronal dendrite growth by mediating a signaling pathway linking RAS and MAP2. May be involved in cellular senescence. This chain is Kinase non-catalytic C-lobe domain-containing protein 1, found in Mus musculus (Mouse).